We begin with the raw amino-acid sequence, 239 residues long: MIKIPLNTLSAKSAAALDQELMSSGAFSIDQLMELAGLSVSQAVFKLQPLNKGKRILVACGPGNNGGDGLVAARHLFHYGYQPTIYYPKQSKNELYQRLRKQLEDLKVPFTEDFPGALKQTDHVVDAIFGFSFSGEVREPFPKVIEALESTSIPVLAVDAPSSWSIEDGPPESGPGKGFMPPALISLTAPKPLVKHFKGRHFLGGRFLSPEMAEQYNLDIPKYEGLDQVVEVPVESGKL.

In terms of domain architecture, YjeF N-terminal spans 14 to 220; sequence AAALDQELMS…EMAEQYNLDI (207 aa). 64-68 serves as a coordination point for (6S)-NADPHX; sequence NNGGD. K(+) contacts are provided by N65 and D126. (6S)-NADPHX is bound by residues 130–136 and D159; that span reads GFSFSGE. S162 contacts K(+).

The protein belongs to the NnrE/AIBP family. Requires K(+) as cofactor.

Its subcellular location is the cytoplasm. It is found in the mitochondrion. It carries out the reaction (6R)-NADHX = (6S)-NADHX. The catalysed reaction is (6R)-NADPHX = (6S)-NADPHX. Functionally, catalyzes the epimerization of the S- and R-forms of NAD(P)HX, a damaged form of NAD(P)H that is a result of enzymatic or heat-dependent hydration. This is a prerequisite for the S-specific NAD(P)H-hydrate dehydratase to allow the repair of both epimers of NAD(P)HX. The polypeptide is NAD(P)H-hydrate epimerase (Phaeosphaeria nodorum (strain SN15 / ATCC MYA-4574 / FGSC 10173) (Glume blotch fungus)).